A 158-amino-acid polypeptide reads, in one-letter code: Endoribonuclease YbeY (158 aa).

Residues His-117, His-121, and His-127 each coordinate Zn(2+).

It belongs to the endoribonuclease YbeY family. Zn(2+) serves as cofactor.

Its subcellular location is the cytoplasm. Its function is as follows. Single strand-specific metallo-endoribonuclease involved in late-stage 70S ribosome quality control and in maturation of the 3' terminus of the 16S rRNA. The sequence is that of Endoribonuclease YbeY from Buchnera aphidicola subsp. Schizaphis graminum (strain Sg).